The following is a 320-amino-acid chain: Melanocyte-stimulating hormone receptor (320 aa).

Topologically, residues 1–40 are extracellular; sequence MPVLGPERRLLASLSSAPPAAPRLGLAANQTNQTGPQCLE. Residue N32 is glycosylated (N-linked (GlcNAc...) asparagine). Residues 41–66 form a helical membrane-spanning segment; that stretch reads VSIPDGLFLSLGLVSLVENVLVVAAI. Residues 67–75 lie on the Cytoplasmic side of the membrane; that stretch reads AKNRNLHSP. The helical transmembrane segment at 76–96 threads the bilayer; sequence MYYFVCCLAVSDLLVSVSNVL. Residues 97–121 lie on the Extracellular side of the membrane; it reads ETAVLLLLEAGALAAQAAVVQQLDN. A helical transmembrane segment spans residues 122-143; that stretch reads VMDVLICGSMVSSLCFLGAIAV. The Cytoplasmic portion of the chain corresponds to 144–166; that stretch reads DRYVSIFYALRYHSIVTLPRAGR. Residues 167–186 traverse the membrane as a helical segment; it reads AIAAIWAGSVLSSTLFIAYY. At 187-194 the chain is on the extracellular side; it reads HHTAVLLG. The helical transmembrane segment at 195-214 threads the bilayer; that stretch reads LVSFFVAMLALMAVLYVHML. Over 215–243 the chain is Cytoplasmic; sequence ARACQHGRHIARLHKTQHPTRQGCGLKGA. Residues 244 to 269 form a helical membrane-spanning segment; sequence ATLTILLGVFLLCWAPFFLHLSLVVL. Topologically, residues 270–282 are extracellular; the sequence is CPQHPTCGCVFKN. A helical membrane pass occupies residues 283-303; sequence VNLFLALVICNSIVDPLIYAF. At 304–320 the chain is on the cytoplasmic side; sequence RSQELRKTLQEVLQCSW.

Belongs to the G-protein coupled receptor 1 family. As to quaternary structure, interacts with MGRN1, but does not undergo MGRN1-mediated ubiquitination; this interaction competes with GNAS-binding and thus inhibits agonist-induced cAMP production. Interacts with OPN3; the interaction results in a decrease in MC1R-mediated cAMP signaling and ultimately a decrease in melanin production in melanocytes.

It is found in the cell membrane. Receptor for MSH (alpha, beta and gamma) and ACTH. The activity of this receptor is mediated by G proteins which activate adenylate cyclase. Mediates melanogenesis, the production of eumelanin (black/brown) and phaeomelanin (red/yellow), via regulation of cAMP signaling in melanocytes. This Sus scrofa (Pig) protein is Melanocyte-stimulating hormone receptor (MC1R).